Here is a 122-residue protein sequence, read N- to C-terminus: Small ribosomal subunit protein uS13 (122 aa).

A disordered region spans residues 93–122; it reads RRSLPVRGQRTHTNARTRKGPAKPIAGKKK.

Belongs to the universal ribosomal protein uS13 family. Part of the 30S ribosomal subunit. Forms a loose heterodimer with protein S19. Forms two bridges to the 50S subunit in the 70S ribosome.

In terms of biological role, located at the top of the head of the 30S subunit, it contacts several helices of the 16S rRNA. In the 70S ribosome it contacts the 23S rRNA (bridge B1a) and protein L5 of the 50S subunit (bridge B1b), connecting the 2 subunits; these bridges are implicated in subunit movement. Contacts the tRNAs in the A and P-sites. The sequence is that of Small ribosomal subunit protein uS13 from Chelativorans sp. (strain BNC1).